The following is a 272-amino-acid chain: NADH-cytochrome b5 reductase 3 (272 aa).

The FAD-binding FR-type domain occupies 11–123; sequence DIKYPLRLID…RGPNGLLVYQ (113 aa). Residue Lys13 is modified to N6-acetyllysine. A Phosphotyrosine modification is found at Tyr14. At Lys21 the chain carries N6-acetyllysine. Positions 63, 64, 65, 80, 82, and 84 each coordinate FAD. Lys91 is subject to N6-acetyllysine. FAD-binding residues include Lys97, Met98, Ser99, and Thr156.

This sequence belongs to the flavoprotein pyridine nucleotide cytochrome reductase family. In terms of assembly, component of a complex composed of cytochrome b5, NADH-cytochrome b5 reductase (CYB5R3) and MTARC2. Interacts with MTLN; the interaction is required to maintain cellular lipid composition and leads to stimulation of mitochondrial respiratory complex I activity. The cofactor is FAD.

The protein resides in the endoplasmic reticulum membrane. Its subcellular location is the mitochondrion outer membrane. It carries out the reaction 2 Fe(III)-[cytochrome b5] + NADH = 2 Fe(II)-[cytochrome b5] + NAD(+) + H(+). Functionally, catalyzes the reduction of two molecules of cytochrome b5 using NADH as the electron donor. The protein is NADH-cytochrome b5 reductase 3 (CYB5R3) of Sus scrofa (Pig).